A 231-amino-acid polypeptide reads, in one-letter code: Lipoprotein-releasing system ATP-binding protein LolD (231 aa).

Residues 6–231 (LQVQAVSKSY…YLQAVAEHAQ (226 aa)) enclose the ABC transporter domain. 42-49 (GTSGSGKS) is an ATP binding site.

This sequence belongs to the ABC transporter superfamily. Lipoprotein translocase (TC 3.A.1.125) family. In terms of assembly, the complex is composed of two ATP-binding proteins (LolD) and two transmembrane proteins (LolC and LolE).

It localises to the cell inner membrane. Part of the ABC transporter complex LolCDE involved in the translocation of mature outer membrane-directed lipoproteins, from the inner membrane to the periplasmic chaperone, LolA. Responsible for the formation of the LolA-lipoprotein complex in an ATP-dependent manner. This is Lipoprotein-releasing system ATP-binding protein LolD from Shewanella sp. (strain MR-4).